We begin with the raw amino-acid sequence, 312 residues long: Malate dehydrogenase (312 aa).

Residues Gly-10 to Gly-15 and Asp-34 contribute to the NAD(+) site. Residues Arg-85 and Arg-91 each coordinate substrate. Residues Asn-98 and Leu-121–Asn-123 contribute to the NAD(+) site. 2 residues coordinate substrate: Asn-123 and Arg-154. Residue His-178 is the Proton acceptor of the active site.

Belongs to the LDH/MDH superfamily. MDH type 3 family.

It catalyses the reaction (S)-malate + NAD(+) = oxaloacetate + NADH + H(+). In terms of biological role, catalyzes the reversible oxidation of malate to oxaloacetate. This Staphylococcus saprophyticus subsp. saprophyticus (strain ATCC 15305 / DSM 20229 / NCIMB 8711 / NCTC 7292 / S-41) protein is Malate dehydrogenase.